A 448-amino-acid chain; its full sequence is Homogentisate 1,2-dioxygenase (448 aa).

The Proton acceptor role is filled by histidine 303. Residues histidine 346 and glutamate 352 each contribute to the Fe cation site. Residues tyrosine 361 and histidine 382 each coordinate homogentisate. Histidine 382 contributes to the Fe cation binding site.

It belongs to the homogentisate dioxygenase family. As to quaternary structure, hexamer; dimer of trimers. Requires Fe cation as cofactor.

The enzyme catalyses homogentisate + O2 = 4-maleylacetoacetate + H(+). The protein operates within amino-acid degradation; L-phenylalanine degradation; acetoacetate and fumarate from L-phenylalanine: step 4/6. Functionally, involved in the catabolism of homogentisate (2,5-dihydroxyphenylacetate or 2,5-OH-PhAc), a central intermediate in the degradation of phenylalanine and tyrosine. Catalyzes the oxidative ring cleavage of the aromatic ring of homogentisate to yield maleylacetoacetate. This Bradyrhizobium diazoefficiens (strain JCM 10833 / BCRC 13528 / IAM 13628 / NBRC 14792 / USDA 110) protein is Homogentisate 1,2-dioxygenase.